Here is a 159-residue protein sequence, read N- to C-terminus: Testis-specific XK-related protein, Y-linked (159 aa).

The next 3 helical transmembrane spans lie at 1–21 (MFIF…VGAI), 45–65 (IYLM…LAFF), and 72–92 (GSLH…WLEF).

This sequence belongs to the XK family. In terms of tissue distribution, testis specific.

It localises to the membrane. This chain is Testis-specific XK-related protein, Y-linked (XKRY), found in Homo sapiens (Human).